We begin with the raw amino-acid sequence, 110 residues long: Transmembrane protein 233 (110 aa).

Positions 1 to 32 (MSQYASRSDSKGALDSSSPEAYTEDDKTEEDI) are disordered. At 1-42 (MSQYASRSDSKGALDSSSPEAYTEDDKTEEDIPAPSNYLWLT) the chain is on the cytoplasmic side. Acidic residues predominate over residues 22–32 (YTEDDKTEEDI). Positions 43 to 63 (IISCFCPAYPVNIVALVFSIM) form an intramembrane region, helical. At 64 to 85 (SLNSYNDGDYEGARRLGRNAKW) the chain is on the cytoplasmic side. A helical transmembrane segment spans residues 86-106 (VAIASIIIGLVIIGVSCAVHF). At 107–110 (SRNP) the chain is on the extracellular side.

Belongs to the CD225/Dispanin family. In terms of assembly, interacts with the giant stinging tree toxin ExTxA (P0DQP3). Interacts with Nav1.7/SCN9A. Interacts with Nav1.1/SCN1A, Nav1.2/SCN2A, Nav1.3/SCN3A, Nav1.4/SCN4A, Nav1.5/SCN5A, and Nav1.6/SCN8A. In terms of tissue distribution, probably expressed in nociceptive neurons. Detected in dorsal root ganglion neurons.

It is found in the membrane. Functionally, probable accessory protein of voltage-gated sodium channels. This Mus musculus (Mouse) protein is Transmembrane protein 233.